A 193-amino-acid chain; its full sequence is MFHLLAGLGNPGTQYTLTRHNAGFMVIDAILDKFHFPNFKKKNNALISIGNIESYRVILVKPWTFMNNSGVPIMNIVSLYKIPLDNMIVFHDEVEIDFCTIRVKKSGGNAGHNGLKSIDNFLGKDYWRVRFGIGHPRNKMDLSDYVLSHFHNLNAVNNTISSIVEHITLLLEKNHTTFTDKVRNTLKYEDIPD.

Tyr15 is a tRNA binding site. Residue His20 is the Proton acceptor of the active site. Residues Phe65, Asn67, and Asn113 each coordinate tRNA.

Belongs to the PTH family. Monomer.

The protein resides in the cytoplasm. It catalyses the reaction an N-acyl-L-alpha-aminoacyl-tRNA + H2O = an N-acyl-L-amino acid + a tRNA + H(+). Its function is as follows. Hydrolyzes ribosome-free peptidyl-tRNAs (with 1 or more amino acids incorporated), which drop off the ribosome during protein synthesis, or as a result of ribosome stalling. In terms of biological role, catalyzes the release of premature peptidyl moieties from peptidyl-tRNA molecules trapped in stalled 50S ribosomal subunits, and thus maintains levels of free tRNAs and 50S ribosomes. This is Peptidyl-tRNA hydrolase from Ehrlichia canis (strain Jake).